Here is a 927-residue protein sequence, read N- to C-terminus: MPSSTASSEDAPITSTAWMNWKDVFLKCVQPMLAVVLLLRFSSIVDEAGFTTTIILVFFTFLVSLVTGWSACTVVSRKSSEVGFVKTMLAYSSTEFAISFSIIYLFCLLVATSTFLTSAAEAVLHIFSTFSLELLDGATHDLRLVSSVLSLITLALCMVRNRNARFVRTFIFALTCIAIALQLSSVMFRYGEYQLRRVSDRNAMIPSPPNEEISTIFAQLFPAAMCGLTILNIGSKLQNTAPRGALIAIAVSACFYGAAAMLDYVEFFARTSTSNSTGSAEYNEFLSYIYTTVPMAIVITLACVLSAVSTLKYAAVILQSLGRSNQCRCILWLAKGFGERDIPIRCLLLLSTVQILVSAIGSYDILCIPTTVFYLFAYALFNFYVFLVKLSDPEIPSPPTLLSLAISAACFIASLYTNRHLALFIASIFAISYCSLLYIIRRERNEDGEECPKSMYSSVLEQMHELQQEPDSRRHFHPQILLLSGSPAARPGLVDFAHSITRGKSLLICGYIIPKISNKVEQPMTWTEYLMQQSPCSRSYLLQLKIDKQINDWLRAREVNAFGAAICCTKQAEGANILLQTAGLGRLRPNILMLGYKTGWEKLSKESISEYYGMLSNAFDKQVGVIIFRNEASGFDVTSSIRKNGAPINDDEDLAEYVDSATPKLADQGSQKKDVPRGKLLNTFRKMSMAVNKDLESGGRRSTSSSTRFQVIDKHSISEPDQKIIMAQMFRFRKRIPNARIDVFWLREAGGLTMLAPYLLTQAGSFLEGAHIRVFTKTDGKDNKRINEEQKNMAAILRKFHIDSSDLHILPEFSKPPCKQTYDEFRAKIDKYKVETSSSGEPVDGSFDNNQIFNLREKTRSFLRASELIREHSSDADLIVCTLPSARPEIPSPIYLGWIDMLSRQTPPTCLVRGNQVSMSALRLKFP.

The Cytoplasmic segment spans residues 1–23; it reads MPSSTASSEDAPITSTAWMNWKD. The helical transmembrane segment at 24-44 threads the bilayer; that stretch reads VFLKCVQPMLAVVLLLRFSSI. Topologically, residues 45–53 are extracellular; that stretch reads VDEAGFTTT. Residues 54 to 74 form a helical membrane-spanning segment; the sequence is IILVFFTFLVSLVTGWSACTV. Residues 75-95 lie on the Cytoplasmic side of the membrane; it reads VSRKSSEVGFVKTMLAYSSTE. Residues 96 to 116 form a helical membrane-spanning segment; it reads FAISFSIIYLFCLLVATSTFL. Residues 117 to 141 are Extracellular-facing; that stretch reads TSAAEAVLHIFSTFSLELLDGATHD. The chain crosses the membrane as a helical span at residues 142 to 159; that stretch reads LRLVSSVLSLITLALCMV. Residues 160–165 lie on the Cytoplasmic side of the membrane; the sequence is RNRNAR. Residues 166–186 form a helical membrane-spanning segment; sequence FVRTFIFALTCIAIALQLSSV. Over 187–212 the chain is Extracellular; the sequence is MFRYGEYQLRRVSDRNAMIPSPPNEE. The chain crosses the membrane as a helical span at residues 213-233; sequence ISTIFAQLFPAAMCGLTILNI. Residues 234–244 are Cytoplasmic-facing; the sequence is GSKLQNTAPRG. The helical transmembrane segment at 245–265 threads the bilayer; the sequence is ALIAIAVSACFYGAAAMLDYV. Topologically, residues 266-284 are extracellular; it reads EFFARTSTSNSTGSAEYNE. Asn-275 carries an N-linked (GlcNAc...) asparagine glycan. A helical membrane pass occupies residues 285-305; the sequence is FLSYIYTTVPMAIVITLACVL. The Cytoplasmic segment spans residues 306–345; sequence SAVSTLKYAAVILQSLGRSNQCRCILWLAKGFGERDIPIR. The helical transmembrane segment at 346–366 threads the bilayer; the sequence is CLLLLSTVQILVSAIGSYDIL. A topological domain (extracellular) is located at residue Cys-367. A helical transmembrane segment spans residues 368–388; it reads IPTTVFYLFAYALFNFYVFLV. The Cytoplasmic segment spans residues 389-394; it reads KLSDPE. The chain crosses the membrane as a helical span at residues 395–415; that stretch reads IPSPPTLLSLAISAACFIASL. The Extracellular portion of the chain corresponds to 416-419; it reads YTNR. A helical transmembrane segment spans residues 420–440; that stretch reads HLALFIASIFAISYCSLLYII. The Cytoplasmic segment spans residues 441 to 927; that stretch reads RRERNEDGEE…SMSALRLKFP (487 aa).

It belongs to the SLC12A transporter family.

The protein localises to the cell membrane. This Caenorhabditis elegans protein is Solute carrier family 12 protein B0303.11.